Here is a 176-residue protein sequence, read N- to C-terminus: Peptide methionine sulfoxide reductase MsrA (176 aa).

Residue Cys14 is part of the active site.

Belongs to the MsrA Met sulfoxide reductase family.

It carries out the reaction L-methionyl-[protein] + [thioredoxin]-disulfide + H2O = L-methionyl-(S)-S-oxide-[protein] + [thioredoxin]-dithiol. The catalysed reaction is [thioredoxin]-disulfide + L-methionine + H2O = L-methionine (S)-S-oxide + [thioredoxin]-dithiol. Has an important function as a repair enzyme for proteins that have been inactivated by oxidation. Catalyzes the reversible oxidation-reduction of methionine sulfoxide in proteins to methionine. The sequence is that of Peptide methionine sulfoxide reductase MsrA from Halalkalibacterium halodurans (strain ATCC BAA-125 / DSM 18197 / FERM 7344 / JCM 9153 / C-125) (Bacillus halodurans).